The primary structure comprises 508 residues: Phosphoglycerate kinase A (508 aa).

The (2R)-3-phosphoglycerate site is built by V32, D33, F34, N35, R48, S70, H71, G73, R74, R224, H260, and R261. 2 residues coordinate ADP: G306 and A307. Residue G306 participates in CDP binding. Positions 307 and 308 each coordinate AMP. Residue A307 participates in ATP binding. A307 contacts Mg(2+). K308 contributes to the (2R)-3-phosphoglycerate binding site. Residue E311 participates in CDP binding. E311 contacts Mg(2+). Positions 312 and 330 each coordinate ADP. K312 contributes to the AMP binding site. K312 lines the ATP pocket. G330 contributes to the CDP binding site. Residues A331 and A403 each coordinate AMP. Residues A331 and A403 each contribute to the ATP site. ADP contacts are provided by A403 and N427. Residues G428 and F433 each coordinate CDP. The ADP site is built by F433, E434, E466, and S467. E434 contributes to the AMP binding site. Residues E434, E466, and S467 each coordinate ATP. Residue E466 participates in Mg(2+) binding.

The protein belongs to the phosphoglycerate kinase family. In terms of assembly, monomer. Requires Mg(2+) as cofactor.

It carries out the reaction (2R)-3-phosphoglycerate + ATP = (2R)-3-phospho-glyceroyl phosphate + ADP. The protein operates within carbohydrate degradation; glycolysis; pyruvate from D-glyceraldehyde 3-phosphate: step 2/5. The polypeptide is Phosphoglycerate kinase A (Trypanosoma brucei brucei).